Reading from the N-terminus, the 84-residue chain is Magnetosome protein MamR (84 aa).

Belongs to the magnetosome MamR family.

It is found in the magnetosome. In terms of biological role, may play a role in controlling magnetite number and size but not in control of magnetite morphology. This chain is Magnetosome protein MamR, found in Paramagnetospirillum magneticum (strain ATCC 700264 / AMB-1) (Magnetospirillum magneticum).